Here is a 757-residue protein sequence, read N- to C-terminus: Serine/threonine-protein phosphatase 2A 56 kDa regulatory subunit delta isoform (757 aa).

Residues 1–11 (MMRGFKQRLIK) show a composition bias toward basic residues. 2 disordered regions span residues 1–172 (MMRG…EDHA) and 188–250 (ISNA…NPDT). Residues 12–21 (KTTGSSSSSS) are compositionally biased toward low complexity. The segment covering 23 to 34 (KKKDKEKEKEKS) has biased composition (basic and acidic residues). Low complexity-rich tracts occupy residues 35–66 (STTS…GSKS), 86–119 (SSTS…STKK), and 128–147 (QSKQ…SSSS). Residues 160–172 (TKDDKSTSGEDHA) show a composition bias toward basic and acidic residues. Residues 197-216 (SSDVENGNSNNNNMNINTSN) are compositionally biased toward low complexity. Polar residues predominate over residues 217–228 (TQDANHASSQSI). Residues Thr-242 and Thr-257 each carry the phosphothreonine modification. The segment at 734–757 (SFNTASENNTLNEENENDCDSEIQ) is disordered. Over residues 746-757 (EENENDCDSEIQ) the composition is skewed to acidic residues.

It belongs to the phosphatase 2A regulatory subunit B family. PP2A consists of a common heterodimeric core enzyme, composed of a 36 kDa catalytic subunit (subunit C) and a 65 kDa constant regulatory subunit (PR65 or subunit A), that associates with a variety of regulatory subunits. Proteins that associate with the core dimer include three families of regulatory subunits B (the R2/B/PR55/B55, R3/B''/PR72/PR130/PR59 and R5/B'/B56 families), the 48 kDa variable regulatory subunit, viral proteins, and cell signaling molecules.

It is found in the cytoplasm. Its subcellular location is the nucleus. Functionally, the B regulatory subunit might modulate substrate selectivity and catalytic activity, and might also direct the localization of the catalytic enzyme to a particular subcellular compartment. In terms of biological role, multicopy suppressor of ROX3 and HSP60. The polypeptide is Serine/threonine-protein phosphatase 2A 56 kDa regulatory subunit delta isoform (RTS1) (Saccharomyces cerevisiae (strain ATCC 204508 / S288c) (Baker's yeast)).